The sequence spans 235 residues: Alpha-S2-casein (235 aa).

A signal peptide spans 1 to 15 (MKFFIFTCLLAVAFA). A phosphoserine mark is found at Ser23, Ser24, Ser25, Ser28, Ser47, Ser72, Ser73, Ser74, Ser77, Ser147, Ser149, and Ser168. Residues 144 to 158 (EELSTSEEPVSSSQE) show a composition bias toward polar residues. Residues 144–163 (EELSTSEEPVSSSQEENTKT) are disordered.

Belongs to the alpha-casein family. As to expression, mammary gland specific. Secreted in milk.

Its subcellular location is the secreted. Functionally, important role in the capacity of milk to transport calcium phosphate. In Sus scrofa (Pig), this protein is Alpha-S2-casein (CSN1S2).